Consider the following 546-residue polypeptide: MFS-type transporter patC (546 aa).

Polar residues predominate over residues 1 to 15 (MSIDASPSESVLESQ). Residues 1–29 (MSIDASPSESVLESQTPDRVDESIPIKAE) are disordered. The span at 16 to 29 (TPDRVDESIPIKAE) shows a compositional bias: basic and acidic residues. 14 helical membrane-spanning segments follow: residues 41–61 (IVGF…LLYG), 89–109 (VGFT…YAIF), 113–133 (WLFL…GAAP), 143–163 (VWAG…ITIL), 171–191 (VYVG…PIIG), 203–223 (WSFY…VFLL), 245–265 (WVGT…IVFG), 277–297 (IALY…QYFC), 318–338 (LLLY…VYYI), 350–370 (GIMS…TILL), 379–399 (GYFI…AVLM), 416–436 (ILMG…PAIV), 447–467 (FMNI…SAIF), and 515–535 (VIVS…ALYV).

This sequence belongs to the major facilitator superfamily. TCR/Tet family.

Its subcellular location is the vacuole membrane. It is found in the cell membrane. Its function is as follows. MFS-type transporter; part of the gene cluster that mediates the biosynthesis of patulin, an acetate-derived tetraketide mycotoxin produced by several fungal species that shows antimicrobial properties against several bacteria. May be involved in the secretion of E-ascladiol to be converted to patulin by the secreted patulin synthase patE. This is MFS-type transporter patC from Penicillium expansum (Blue mold rot fungus).